A 68-amino-acid chain; its full sequence is DNA-directed RNA polymerase subunit omega (68 aa).

Belongs to the RNA polymerase subunit omega family. The RNAP catalytic core consists of 2 alpha, 1 beta, 1 beta' and 1 omega subunit. When a sigma factor is associated with the core the holoenzyme is formed, which can initiate transcription.

The enzyme catalyses RNA(n) + a ribonucleoside 5'-triphosphate = RNA(n+1) + diphosphate. Functionally, promotes RNA polymerase assembly. Latches the N- and C-terminal regions of the beta' subunit thereby facilitating its interaction with the beta and alpha subunits. This chain is DNA-directed RNA polymerase subunit omega, found in Nitrosospira multiformis (strain ATCC 25196 / NCIMB 11849 / C 71).